Consider the following 818-residue polypeptide: Serine/threonine-protein phosphatase 4 regulatory subunit 3 (818 aa).

The 100-residue stretch at 1–100 (MTDTRRRVKV…DEIWEKICQV (100 aa)) folds into the WH1 domain. The disordered stretch occupies residues 718-818 (LAKSSFSGRQ…PPSKKSRLSS (101 aa)). The span at 721–730 (SSFSGRQNPS) shows a compositional bias: polar residues. The segment covering 736-756 (SGSTKTSLSSPPPSASLSPGS) has biased composition (low complexity). The segment covering 788–804 (YPDDDEEEEDDDDEESK) has biased composition (acidic residues).

It belongs to the SMEK family. As to quaternary structure, serine/threonine-protein phosphatase 4 (PP4) occurs in different assemblies of the catalytic and one or more regulatory subunits.

Its function is as follows. Regulatory subunit of serine/threonine-protein phosphatase 4. This chain is Serine/threonine-protein phosphatase 4 regulatory subunit 3 (smek1), found in Tetraodon nigroviridis (Spotted green pufferfish).